An 88-amino-acid chain; its full sequence is Small ribosomal subunit protein bS20 (88 aa).

2 disordered regions span residues 1–23 (MANSPQARKRARQAENRRQHNAA) and 69–88 (PNKAARHKSRLNTKIKAMAA). Residues 69 to 81 (PNKAARHKSRLNT) are compositionally biased toward basic residues.

This sequence belongs to the bacterial ribosomal protein bS20 family.

In terms of biological role, binds directly to 16S ribosomal RNA. The sequence is that of Small ribosomal subunit protein bS20 from Alcanivorax borkumensis (strain ATCC 700651 / DSM 11573 / NCIMB 13689 / SK2).